The following is a 58-amino-acid chain: Small ribosomal subunit protein bS21 (58 aa).

A disordered region spans residues 37–58; that stretch reads FYDKPSVKKRAKSKAAAKYRGR. Residues 43–58 show a composition bias toward basic residues; sequence VKKRAKSKAAAKYRGR.

It belongs to the bacterial ribosomal protein bS21 family.

This Chlamydia muridarum (strain MoPn / Nigg) protein is Small ribosomal subunit protein bS21 (rpsU).